Here is a 612-residue protein sequence, read N- to C-terminus: Sulfite reductase [NADPH] hemoprotein beta-component (612 aa).

The disordered stretch occupies residues 1–26 (MDDHKPIETPDGPAVDTPGIGARRYE). Cys469, Cys475, Cys514, and Cys518 together coordinate [4Fe-4S] cluster. Cys518 serves as a coordination point for siroheme.

The protein belongs to the nitrite and sulfite reductase 4Fe-4S domain family. Alpha(8)-beta(8). The alpha component is a flavoprotein, the beta component is a hemoprotein. Siroheme is required as a cofactor. It depends on [4Fe-4S] cluster as a cofactor.

It catalyses the reaction hydrogen sulfide + 3 NADP(+) + 3 H2O = sulfite + 3 NADPH + 4 H(+). Its pathway is sulfur metabolism; hydrogen sulfide biosynthesis; hydrogen sulfide from sulfite (NADPH route): step 1/1. Component of the sulfite reductase complex that catalyzes the 6-electron reduction of sulfite to sulfide. This is one of several activities required for the biosynthesis of L-cysteine from sulfate. This chain is Sulfite reductase [NADPH] hemoprotein beta-component, found in Methylorubrum extorquens (strain ATCC 14718 / DSM 1338 / JCM 2805 / NCIMB 9133 / AM1) (Methylobacterium extorquens).